We begin with the raw amino-acid sequence, 145 residues long: Mitochondrial import receptor subunit TOM20 homolog (145 aa).

The Mitochondrial intermembrane portion of the chain corresponds to 1 to 6 (MVGRNS). The helical transmembrane segment at 7 to 24 (AIAAGVCGALFIGYCIYF) threads the bilayer. Topologically, residues 25-145 (DRKRRSDPNF…AQSLAEDDVE (121 aa)) are cytoplasmic. Glycyl lysine isopeptide (Lys-Gly) (interchain with G-Cter in ubiquitin) cross-links involve residues Lys-35, Lys-56, Lys-61, and Lys-68. Phosphoserine occurs at positions 135 and 138.

The protein belongs to the Tom20 family. In terms of assembly, forms part of the preprotein translocase complex of the outer mitochondrial membrane (TOM complex) which consists of at least 7 different proteins (TOMM5, TOMM6, TOMM7, TOMM20, TOMM22, TOMM40 and TOMM70). Interacts with TOM22. Interacts with APEX1. Interacts with TBC1D21. Upon mitochondrial depolarization, interacts with PINK1; the interaction is required for PINK1-TOM-TIM23 supercomplex formation which is critical for PINK1 stabilization at the outer mitochondrial membrane, kinase activation and downstream mitophagy. In terms of processing, ubiquitinated by PRKN during mitophagy, leading to its degradation and enhancement of mitophagy. Deubiquitinated by USP30. In terms of tissue distribution, expressed in brain, kidney, stomach, colon, jejunum, ileum, testis, ovary and oviduct (at protein level). In the brain, expressed in neural cells of the cerebrum and cerebellum (at protein level). In the kidney, expressed in the proximal to distal tubule in the cortex and the outer and inner zones of the medulla (at protein level). In the stomach, expressed in the basal layer of stratified squamous epithelia in the forestomach and in the gastric pit and fundic gland of the glandular stomach (at protein level). Expressed in epithelial cells of the jejunum, ileum, and colon (at protein level). In the testis, expressed by spermatocytes and spermatogonia (at protein level). In the ovaries, expressed by follicular epithelial cells and corpus luteum cells (at protein level). In the oviduct, expressed in the epithelia of the isthmus and the ciliated cells of the ampulla (at protein level). Expressed in the sperm midpiece (at protein level).

Its subcellular location is the mitochondrion outer membrane. Its function is as follows. Central component of the receptor complex responsible for the recognition and translocation of cytosolically synthesized mitochondrial preproteins. Together with TOM22 functions as the transit peptide receptor at the surface of the mitochondrion outer membrane and facilitates the movement of preproteins into the TOM40 translocation pore. Required for the translocation across the mitochondrial outer membrane of cytochrome P450 monooxygenases. This is Mitochondrial import receptor subunit TOM20 homolog (Tomm20) from Mus musculus (Mouse).